The following is a 344-amino-acid chain: Dihydroorotate dehydrogenase (quinone) (344 aa).

Residues 65–69 (AGFDK) and Thr89 contribute to the FMN site. Lys69 is a substrate binding site. 114–118 (NRMGF) contacts substrate. FMN-binding residues include Asn145 and Asn178. Substrate is bound at residue Asn178. The Nucleophile role is filled by Ser181. Asn183 provides a ligand contact to substrate. FMN contacts are provided by Lys215 and Thr243. Residue 244 to 245 (NT) coordinates substrate. Residues Gly269, Gly298, and 319 to 320 (YT) contribute to the FMN site.

The protein belongs to the dihydroorotate dehydrogenase family. Type 2 subfamily. As to quaternary structure, monomer. Requires FMN as cofactor.

It is found in the cell membrane. It catalyses the reaction (S)-dihydroorotate + a quinone = orotate + a quinol. It functions in the pathway pyrimidine metabolism; UMP biosynthesis via de novo pathway; orotate from (S)-dihydroorotate (quinone route): step 1/1. In terms of biological role, catalyzes the conversion of dihydroorotate to orotate with quinone as electron acceptor. This Clavibacter michiganensis subsp. michiganensis (strain NCPPB 382) protein is Dihydroorotate dehydrogenase (quinone).